We begin with the raw amino-acid sequence, 128 residues long: Head peptide (128 aa).

The first 22 residues, 1-22, serve as a signal peptide directing secretion; that stretch reads MWKFASIVVLVVCLAWAVYCED. At Gln23 the chain carries Pyrrolidone carboxylic acid. Pro26 carries the post-translational modification Hydroxyproline; partial. Residues 27–128 form a disordered region; the sequence is SLKTRFGRSA…GRANKKRAAN (102 aa). Phe32 carries the phenylalanine amide modification. Residues 35-55 constitute a propeptide that is removed on maturation; it reads SADEPESDNYVSNDIMEKRSA. Position 56 is a pyrrolidone carboxylic acid (Gln56). The residue at position 59 (Pro59) is a Hydroxyproline; partial. A Phenylalanine amide modification is found at Phe65. Positions 66–78 are enriched in basic and acidic residues; the sequence is GRSEGAEVMEKRS. A propeptide spanning residues 68-79 is cleaved from the precursor; it reads SEGAEVMEKRSA. The residue at position 80 (Gln80) is a Pyrrolidone carboxylic acid. Pro83 is modified (hydroxyproline; partial). The residue at position 89 (Phe89) is a Phenylalanine amide. The propeptide occupies 92 to 128; the sequence is SVANPESDGYMRKRSAESEPFVTRIRHGRANKKRAAN. Residues 115–128 are compositionally biased toward basic residues; it reads RIRHGRANKKRAAN.

This sequence belongs to the NPY family. Expressed in the brain, terminal ganglion, and midgut of adults: numerous neurosecretory cells and midgut endocrine cells. Expression is dynamic depending on reproductive cycle.

The protein resides in the secreted. In terms of biological role, has a role in inhibiting host-seeking behavior during a reproductive cycle. This Aedes aegypti (Yellowfever mosquito) protein is Head peptide.